The chain runs to 253 residues: 2,3-bisphosphoglycerate-dependent phosphoglycerate mutase (253 aa).

Substrate contacts are provided by residues 12–19 (RHGESEWN), 25–26 (TG), R64, 91–94 (ERHY), K102, and 118–119 (RR). H13 (tele-phosphohistidine intermediate) is an active-site residue. Residue E91 is the Proton donor/acceptor of the active site. Residues 126-148 (PPLADGSEFSQSDDPRYASIPPE) form a disordered region. A substrate-binding site is contributed by 187 to 188 (GN).

Belongs to the phosphoglycerate mutase family. BPG-dependent PGAM subfamily.

The catalysed reaction is (2R)-2-phosphoglycerate = (2R)-3-phosphoglycerate. It functions in the pathway carbohydrate degradation; glycolysis; pyruvate from D-glyceraldehyde 3-phosphate: step 3/5. Its function is as follows. Catalyzes the interconversion of 2-phosphoglycerate and 3-phosphoglycerate. In Streptomyces avermitilis (strain ATCC 31267 / DSM 46492 / JCM 5070 / NBRC 14893 / NCIMB 12804 / NRRL 8165 / MA-4680), this protein is 2,3-bisphosphoglycerate-dependent phosphoglycerate mutase.